We begin with the raw amino-acid sequence, 186 residues long: Thioredoxin M2, chloroplastic (186 aa).

Residues 1 to 72 (MAAFTCTSRP…RVSRLRRAVV (72 aa)) constitute a chloroplast transit peptide. Positions 73–186 (CEAQETTTDI…LTSSLDKFLP (114 aa)) constitute a Thioredoxin domain. Catalysis depends on nucleophile residues C110 and C113. A disulfide bond links C110 and C113.

It belongs to the thioredoxin family. Plant M-type subfamily. In terms of assembly, interacts with G6PD1 and G6PD4. Interacts with PGL3.

Its subcellular location is the plastid. It is found in the chloroplast stroma. Thiol-disulfide oxidoreductase that may participate in various redox reactions. May activate NADP-malate dehydrogenase. The sequence is that of Thioredoxin M2, chloroplastic from Arabidopsis thaliana (Mouse-ear cress).